Consider the following 212-residue polypeptide: ATP phosphoribosyltransferase (212 aa).

Belongs to the ATP phosphoribosyltransferase family. Short subfamily. As to quaternary structure, heteromultimer composed of HisG and HisZ subunits.

It is found in the cytoplasm. It catalyses the reaction 1-(5-phospho-beta-D-ribosyl)-ATP + diphosphate = 5-phospho-alpha-D-ribose 1-diphosphate + ATP. It participates in amino-acid biosynthesis; L-histidine biosynthesis; L-histidine from 5-phospho-alpha-D-ribose 1-diphosphate: step 1/9. Functionally, catalyzes the condensation of ATP and 5-phosphoribose 1-diphosphate to form N'-(5'-phosphoribosyl)-ATP (PR-ATP). Has a crucial role in the pathway because the rate of histidine biosynthesis seems to be controlled primarily by regulation of HisG enzymatic activity. This is ATP phosphoribosyltransferase from Clostridium novyi (strain NT).